Consider the following 455-residue polypeptide: Probable glycine dehydrogenase (decarboxylating) subunit 1 (455 aa).

This sequence belongs to the GcvP family. N-terminal subunit subfamily. The glycine cleavage system is composed of four proteins: P, T, L and H. In this organism, the P 'protein' is a heterodimer of two subunits.

The catalysed reaction is N(6)-[(R)-lipoyl]-L-lysyl-[glycine-cleavage complex H protein] + glycine + H(+) = N(6)-[(R)-S(8)-aminomethyldihydrolipoyl]-L-lysyl-[glycine-cleavage complex H protein] + CO2. In terms of biological role, the glycine cleavage system catalyzes the degradation of glycine. The P protein binds the alpha-amino group of glycine through its pyridoxal phosphate cofactor; CO(2) is released and the remaining methylamine moiety is then transferred to the lipoamide cofactor of the H protein. The polypeptide is Probable glycine dehydrogenase (decarboxylating) subunit 1 (Saccharolobus solfataricus (strain ATCC 35092 / DSM 1617 / JCM 11322 / P2) (Sulfolobus solfataricus)).